A 36-amino-acid polypeptide reads, in one-letter code: Pancreatic polypeptide (36 aa).

Position 36 is a tyrosine amide (Tyr36).

Belongs to the NPY family.

Its subcellular location is the secreted. Hormone secreted by pancreatic cells that acts as a regulator of pancreatic and gastrointestinal functions probably by signaling through the G protein-coupled receptor NPY4R2. The polypeptide is Pancreatic polypeptide (PPY) (Erinaceus europaeus (Western European hedgehog)).